The primary structure comprises 893 residues: Nitrate reductase [NADPH] (893 aa).

The tract at residues 1-83 (MSVTTQQPAV…KPTPDAHVPR (83 aa)) is disordered. The span at 55–65 (PDFPLPPPANP) shows a compositional bias: pro residues. The span at 71-83 (DIDKPTPDAHVPR) shows a compositional bias: basic and acidic residues. Cys170 contributes to the Mo-molybdopterin binding site. Residues 536 to 611 (NRIVELDELK…MPAYHIGTLS (76 aa)) form the Cytochrome b5 heme-binding domain. His571 and His594 together coordinate heme. An FAD-binding FR-type domain is found at 641 to 752 (RTWSKALLSS…KGPIGKFEYL (112 aa)). FAD is bound by residues 695 to 698 (RSYT), 712 to 716 (LIKIY), 726 to 728 (KMT), Ser776, and Thr779. Residue 863 to 872 (LVLVCGPEGL) coordinates NADP(+).

This sequence belongs to the nitrate reductase family. In terms of assembly, homodimer. FAD is required as a cofactor. It depends on heme as a cofactor. Requires Mo-molybdopterin as cofactor.

It carries out the reaction nitrite + NADP(+) + H2O = nitrate + NADPH + H(+). Its function is as follows. Nitrate reductase is a key enzyme involved in the first step of nitrate assimilation in plants, fungi and bacteria. This Leptosphaeria maculans (Blackleg fungus) protein is Nitrate reductase [NADPH] (NIAD).